The following is a 108-amino-acid chain: Thioredoxin (108 aa).

The Thioredoxin domain maps to 2-108; sequence SEHIVNVTDA…QLAAFLDANI (107 aa). A disulfide bond links C33 and C36.

This sequence belongs to the thioredoxin family.

In terms of biological role, participates in various redox reactions through the reversible oxidation of its active center dithiol to a disulfide and catalyzes dithiol-disulfide exchange reactions. The chain is Thioredoxin (trxA) from Pseudomonas aeruginosa (strain ATCC 15692 / DSM 22644 / CIP 104116 / JCM 14847 / LMG 12228 / 1C / PRS 101 / PAO1).